We begin with the raw amino-acid sequence, 576 residues long: Vesicular glutamate transporter 1 (576 aa).

Residues 1 to 63 (MEFRKEEFKK…CTCFGLPRRY (63 aa)) are Cytoplasmic-facing. A helical transmembrane segment spans residues 64–84 (IIAIMSGLGFCISFGIRCNLG). Residues 85–116 (VAIVSMVNNNTVYKGNKIVIEQAQFTWDPETV) are Vesicular-facing. Asn-93 carries an N-linked (GlcNAc...) asparagine glycan. A helical transmembrane segment spans residues 117–137 (GMIHGSFFWGYIVTQIPGGYI). The Cytoplasmic segment spans residues 138–140 (CQK). A helical transmembrane segment spans residues 141–161 (FAANRVFGFAIVATSTLNMLI). The Vesicular segment spans residues 162-168 (PSAARVH). The chain crosses the membrane as a helical span at residues 169 to 189 (FACVICVRILQGLVEGVTYPA). Residues 190 to 208 (CHGIWSKWAPPLERSRLAT) are Cytoplasmic-facing. A helical membrane pass occupies residues 209–229 (TAFCGSYAGAVVAMPLAGVLV). Over 230–236 (QYSGWSS) the chain is Vesicular. A helical transmembrane segment spans residues 237–257 (VFYVYGSFGIMWYMFWILVSY). At 258–302 (ESPAIHPTISEEEKKYIEESIGESTGLMNPMAKFKAPWRKFFTSM) the chain is on the cytoplasmic side. Residues 303–323 (PVYAIIVANFCRSWTFYLLLI) form a helical membrane-spanning segment. Over 324 to 341 (SQPAYFEEVFGFEISKVG) the chain is Vesicular. Residues 342-362 (LLSALPHLVMTIIVPIGGQIA) traverse the membrane as a helical segment. Residues 363–378 (DFLRTKRIMSTTNVRK) are Cytoplasmic-facing. The chain crosses the membrane as a helical span at residues 379–399 (MMNCGGFGMEATLLLVVGYSH). Residues 400 to 401 (SR) are Vesicular-facing. A helical membrane pass occupies residues 402-422 (GVAISFLVLAVGFSGFAISGF). The Cytoplasmic portion of the chain corresponds to 423-435 (NVNHLDIAPRYAS). The helical transmembrane segment at 436-456 (ILMGISNGVGTLSGMVCPLIV) threads the bilayer. Residues 457-469 (GAMTKHKTREEWQ) are Vesicular-facing. Residues 470–490 (YVFLIASLVHYGGVLFYGIFA) traverse the membrane as a helical segment. Residues 491-576 (SGEKQPWAEP…YGTVAERDLS (86 aa)) are Cytoplasmic-facing. Residues 517–547 (ADESEEQSQAYGAYGSYGATQTTSQQNGGWT) are disordered. Polar residues predominate over residues 534–545 (GATQTTSQQNGG).

Belongs to the major facilitator superfamily. Sodium/anion cotransporter family. VGLUT subfamily.

Its subcellular location is the cytoplasmic vesicle. The protein resides in the secretory vesicle. The protein localises to the synaptic vesicle membrane. It localises to the cell membrane. It is found in the synapse. Its subcellular location is the synaptosome. The enzyme catalyses L-glutamate(out) = L-glutamate(in). The catalysed reaction is chloride(in) = chloride(out). It catalyses the reaction 3 Na(+)(out) + phosphate(out) = 3 Na(+)(in) + phosphate(in). It carries out the reaction phosphate(in) = phosphate(out). The enzyme catalyses K(+)(in) + H(+)(out) = K(+)(out) + H(+)(in). Chloride channel activity is allosterically activated by lumenal H(+) and Cl(-) leading to synaptic vesicles acidification. The L-glutamate transport activity is allosterically activated by lumenal H(+) and Cl(-). The allosteric activation by H(+) efficiently prevents non-vesicular efflux across the plasma membrane, thereby restricting L-glutamate transport activity to acidic membranes such as synaptic vesicles. Functionally, multifunctional transporter that transports L-glutamate as well as multiple ions such as chloride, proton, potassium, sodium and phosphate. At the synaptic vesicle membrane, mainly functions as an uniporter which transports preferentially L-glutamate but also phosphate from the cytoplasm into synaptic vesicles at presynaptic nerve terminals of excitatory neural cells. The L-glutamate or phosphate uniporter activity is electrogenic and is driven by the proton electrochemical gradient, mainly by the electrical gradient established by the vacuolar H(+)-ATPase across the synaptic vesicle membrane. In addition, functions as a chloride channel that allows a chloride permeation through the synaptic vesicle membrane that affects the proton electrochemical gradient and promotes synaptic vesicles acidification. Moreover, may function as a K(+)/H(+) antiport allowing to maintain the electrical gradient and to decrease chemical gradient and therefore sustain vesicular glutamate uptake. The vesicular K(+)/H(+) antiport activity is electroneutral. At the plasma membrane, following exocytosis, functions as a symporter of Na(+) and phosphate from the extracellular space to the cytoplasm allowing synaptic phosphate homeostasis regulation. The symporter activity is driven by an inside negative membrane potential and is electrogenic. Is necessary for synaptic signaling of visual-evoked responses from photoreceptors. The protein is Vesicular glutamate transporter 1 of Xenopus tropicalis (Western clawed frog).